A 210-amino-acid chain; its full sequence is Thymidylate kinase (210 aa).

Residue 9–16 participates in ATP binding; sequence GLEGAGKS.

Belongs to the thymidylate kinase family.

The enzyme catalyses dTMP + ATP = dTDP + ADP. Phosphorylation of dTMP to form dTDP in both de novo and salvage pathways of dTTP synthesis. The polypeptide is Thymidylate kinase (Aliivibrio salmonicida (strain LFI1238) (Vibrio salmonicida (strain LFI1238))).